A 246-amino-acid chain; its full sequence is UDP-N-acetyl-D-mannosaminuronic acid transferase (246 aa).

This sequence belongs to the glycosyltransferase 26 family.

The enzyme catalyses UDP-N-acetyl-alpha-D-mannosaminouronate + N-acetyl-alpha-D-glucosaminyl-di-trans,octa-cis-undecaprenyl diphosphate = beta-D-ManNAcA-(1-&gt;4)-alpha-D-GlcNAc-di-trans,octa-cis-undecaprenyl diphosphate + UDP + H(+). Its pathway is bacterial outer membrane biogenesis; enterobacterial common antigen biosynthesis. Functionally, catalyzes the synthesis of Und-PP-GlcNAc-ManNAcA (Lipid II), the second lipid-linked intermediate involved in enterobacterial common antigen (ECA) synthesis. The protein is UDP-N-acetyl-D-mannosaminuronic acid transferase of Escherichia fergusonii (strain ATCC 35469 / DSM 13698 / CCUG 18766 / IAM 14443 / JCM 21226 / LMG 7866 / NBRC 102419 / NCTC 12128 / CDC 0568-73).